We begin with the raw amino-acid sequence, 370 residues long: Aspartate beta-hydroxylase domain-containing protein 2 (370 aa).

The Cytoplasmic segment spans residues 1 to 57 (MVWALPRTSSPSCIAPSYKPDSGWIKMSAEWLIDWSCLLNGLRDLIAGCIQAVRDCN). The helical transmembrane segment at 58–78 (SFALTTVICLLMLFAWYCYRV) threads the bilayer. Residues 79 to 370 (GKDQPRSPFA…ALDSIFAPGR (292 aa)) are Lumenal-facing. N-linked (GlcNAc...) asparagine glycosylation occurs at Asn212. 2-oxoglutarate is bound by residues Trp229 and Ser273. His284 provides a ligand contact to Fe cation. 293 to 295 (RCH) contacts 2-oxoglutarate. His329 is a binding site for Fe cation. Arg342 contacts 2-oxoglutarate.

Belongs to the aspartyl/asparaginyl beta-hydroxylase family. It depends on Fe cation as a cofactor.

Its subcellular location is the membrane. Functionally, may function as 2-oxoglutarate-dependent dioxygenase. The chain is Aspartate beta-hydroxylase domain-containing protein 2 (asphd2) from Xenopus tropicalis (Western clawed frog).